The sequence spans 780 residues: B3 domain-containing transcription repressor VAL2 (780 aa).

Positions 286–387 form a DNA-binding region, TF-B3; the sequence is FEKVLSASDA…KLVMGYRKAT (102 aa). A CW-type zinc finger spans residues 515 to 565; the sequence is TGEQEQWVQCDACGKWRQLPVDILLPPKWSCSDNLLDPGRSSCSAPDELSP. The Zn(2+) site is built by C524, C527, C545, and C557. 3 disordered regions span residues 577–608, 669–695, and 743–780; these read EFKR…AGIT, KRNK…TEVE, and NTAG…DPVN. Polar residues predominate over residues 584 to 603; the sequence is ASSNEKLNQSQDASALNSLG. Low complexity predominate over residues 674–686; it reads EAGQASQQAQSQS. A compositionally biased stretch (polar residues) spans 743–765; sequence NTAGEQQSSDMVSTEHGSSSAAQ.

It is found in the nucleus. Transcriptional repressor of gene expression involved in embryonic pathways, such as LEC1, ABI3, and FUS3. Repressor of the sugar-inducible genes involved in the seed maturation program in seedlings. Plays an essential role in regulating the transition from seed maturation to seedling growth. Functionally redundant with VAL1/HSI2. In Arabidopsis thaliana (Mouse-ear cress), this protein is B3 domain-containing transcription repressor VAL2 (VAL2).